Reading from the N-terminus, the 193-residue chain is Histone H5 (193 aa).

Residues 1-11 (TDSPIPAPAPA) are compositionally biased toward pro residues. 2 disordered regions span residues 1-29 (TDSP…HPTY) and 80-193 (GVLK…PKKK). Residues 13-24 (KPKRARAPRKPA) are compositionally biased toward basic residues. The H15 domain occupies 25–98 (SHPTYSEMIA…GASGSFRLAK (74 aa)). Residues 104-193 (RSPAGRKKKK…SGARKSPKKK (90 aa)) are compositionally biased toward basic residues.

Belongs to the histone H1/H5 family. Erythroid cells.

It localises to the nucleus. The protein resides in the chromosome. Histone H5 performs the same function as H1, being necessary for the condensation of nucleosome chains into higher order structures, and replaces histone H1 in certain cells. This is Histone H5 from Anser anser anser (Western greylag goose).